A 509-amino-acid chain; its full sequence is Cytochrome P450 monooxygenase fumoA (509 aa).

Residues 5-27 traverse the membrane as a helical segment; that stretch reads LANLNFPYLILSACLSAILLSRF. Residues Asn-317, Asn-369, and Asn-378 are each glycosylated (N-linked (GlcNAc...) asparagine). Cys-456 contacts heme. Asn-464 carries N-linked (GlcNAc...) asparagine glycosylation.

This sequence belongs to the cytochrome P450 family. It depends on heme as a cofactor.

Its subcellular location is the membrane. The protein operates within secondary metabolite biosynthesis. Functionally, cytochrome P450 monooxygenase; part of the gene cluster that mediates the biosynthesis of fumosorinone, a 2-pyridone alkaloid that acts as an inhibitor of protein tyrosine phosphatase 1B which is implicated asa negative regulator of insulin receptor signaling and a potential drug target for the treatment of type II diabetes and other associated metabolic syndromes. The polyketide-amino acid backbone of fumosorinone is first assembled by the PKS-NRPS hybrid fumoS. The PKS modules condense one acetyl-CoA starter unit with 7 malonyl-CoA units, programmed C-methylations occurring after the first 3 and the sixth extensions, and cycles of full reduction occurring after the first 2 extensions. Because fumoS lacks a designated enoyl reductase (ER) domain, the required activity is provided the enoyl reductase fumoC. Upon formation of the polyketide backbone on the thiotemplate, the polyketide is transferred to the NRPS module and linked to tyrosine to produce the acyltetramic acid intermediate called prefumosorinone A. The cytochrome P450 monooxygenase fumoA then probably catalyzes an unprecedented oxidative ring expansion of prefumosorinone A to form prefumosorinone B which contains the 2-pyridone core of fumosorinone. The cytochrome P450 monooxygenase fumoB might hydroxylate the nitrogen of prefumosorinone B, but not the acyltetramic acid prefumosorinone A, to form fumosorinone. This Cordyceps fumosorosea (strain ARSEF 2679) (Isaria fumosorosea) protein is Cytochrome P450 monooxygenase fumoA.